The following is a 229-amino-acid chain: Coiled-coil domain-containing protein 134 (229 aa).

The first 22 residues, 1–22 (MDLLQSLAVFFVLLLPGTEVTG), serve as a signal peptide directing secretion. The N-linked (GlcNAc...) asparagine glycan is linked to Asn148. The tract at residues 191-229 (PSTDPFQKALREEEKRRKKEEKRKEIRKGPRISRSQSEL) is disordered. The stretch at 196-218 (FQKALREEEKRRKKEEKRKEIRK) forms a coiled coil. The Prevents secretion from ER motif lies at 226-229 (QSEL).

This sequence belongs to the CCDC134 family. Interacts with TADA2A. Associates with the PCAF complex via TADA2A binding. O-glycosylated, with additional sialic acid modifications.

Its subcellular location is the endoplasmic reticulum lumen. The protein localises to the secreted. The protein resides in the cytoplasm. It localises to the nucleus. Its function is as follows. Molecular adapter required to prevent protein hyperglycosylation of HSP90B1: during translation, associates with nascent HSP90B1 and the STT3A catalytic component of the OST-A complex and tethers them to a specialized translocon that forms a microenvironment for HSP90B1 folding. In the CCDC134-containing translocon, STT3A associates with the SRT pseudosubstrate motif of HSP90B1, preventing access to facultative glycosylation sites until folding is completed, preventing hyperglycosylation and subsequent degradation of HSP90B1. In extracellular secreted form, promotes proliferation and activation of CD8(+) T-cells, suggesting a cytokine-like function. May inhibit ERK and JNK signaling activity. May suppress cell migration and invasion activity, via its effects on ERK and JNK signaling. May also localize in the nucleus: enhances stability of the PCAF histone acetyltransferase (HAT) complex member TADA2A and thus promotes PCAF-mediated histone acetyltransferase activity. Has a critical role in the regulation of osteogenesis and bone development. In Rattus norvegicus (Rat), this protein is Coiled-coil domain-containing protein 134 (Ccdc134).